A 294-amino-acid polypeptide reads, in one-letter code: 4-hydroxy-tetrahydrodipicolinate synthase (294 aa).

Ser-47 serves as a coordination point for pyruvate. The active-site Proton donor/acceptor is Tyr-135. The active-site Schiff-base intermediate with substrate is Lys-163. Ile-205 contacts pyruvate.

This sequence belongs to the DapA family. As to quaternary structure, homotetramer; dimer of dimers.

Its subcellular location is the cytoplasm. It carries out the reaction L-aspartate 4-semialdehyde + pyruvate = (2S,4S)-4-hydroxy-2,3,4,5-tetrahydrodipicolinate + H2O + H(+). It participates in amino-acid biosynthesis; L-lysine biosynthesis via DAP pathway; (S)-tetrahydrodipicolinate from L-aspartate: step 3/4. In terms of biological role, catalyzes the condensation of (S)-aspartate-beta-semialdehyde [(S)-ASA] and pyruvate to 4-hydroxy-tetrahydrodipicolinate (HTPA). The polypeptide is 4-hydroxy-tetrahydrodipicolinate synthase (Ralstonia nicotianae (strain ATCC BAA-1114 / GMI1000) (Ralstonia solanacearum)).